A 478-amino-acid polypeptide reads, in one-letter code: Odorant receptor coreceptor (478 aa).

Residues 1-43 (MNVQPTKYHGLVLDLMPNIRLMQGFGHFLFRYVNGPVLIRKLY) are Cytoplasmic-facing. Residues 44-64 (SWWNLIMILLQYFAIMGNLVM) traverse the membrane as a helical segment. At 65-73 (NTGDVNELT) the chain is on the extracellular side. Residues 74–94 (ANTITTLFFTHSVTKFIYVAV) traverse the membrane as a helical segment. The Cytoplasmic segment spans residues 95–133 (NSEHFYRTLGIWNQPNSHSLFAESDARYHSIALAKMRKL). The chain crosses the membrane as a helical span at residues 134–154 (LVMVMVTTVLSVVAWITITFF). Residues 155 to 187 (GDSVKNVFDKETNETYTVEIPRLPIKAWYPWDA) are Extracellular-facing. N167 carries N-linked (GlcNAc...) asparagine glycosylation. A helical membrane pass occupies residues 188 to 208 (MSGVPYFFSFIYQAYFLLFSM). Topologically, residues 209–343 (CQANLADVMF…VERHKHVVRL (135 aa)) are cytoplasmic. The chain crosses the membrane as a helical span at residues 344-364 (VSAIGETYGAALLLHMLTSTI). The Extracellular segment spans residues 365-382 (KLTLLAYQATKIDALNVY). The helical transmembrane segment at 383-403 (GLTVIGYLVYALAQVFLFCIF) threads the bilayer. Residues 404–454 (GNRLIEESSSVMEAAYSCHWYDGSEEAKTFVQIVCQQCQKAMTISGAKFFT) are Cytoplasmic-facing. A helical transmembrane segment spans residues 455–475 (VSLDLFASVLGAVVTYFMVLV). Residues 476–478 (QLK) are Extracellular-facing.

Belongs to the insect chemoreceptor superfamily. Heteromeric odorant receptor channel (TC 1.A.69) family. Orco subfamily. Heterodimer with conventional odorant receptors (ORs). Complexes exist early in the endomembrane system in olfactory sensory neurons (OSNs), coupling these complexes to the conserved ciliary trafficking pathway. Found specifically within most antennal and maxillary palp sensilla, as well as in a subset of proboscis sensilla.

The protein localises to the cell membrane. Functionally, odorant coreceptor which complexes with conventional odorant receptors (ORs) to form odorant-sensing units, providing sensitive and prolonged odorant signaling and calcium permeability. Orco is a universal and integral part of the functional odorant receptor, involved in the dendritic localization of other olfactory receptors. Plays a key role in preferred attraction of females for humans over non-human hosts for blood feeding. Human attraction plays a crucial role in the transmission of dengue and yellow fever by the mosquito. Also required for the response to the insect repellent IR3535; or to N,N-Diethyl-meta-toluamide (DEET), the most widely used insect repellent worldwide. The sequence is that of Odorant receptor coreceptor (SGPRor7) from Aedes aegypti (Yellowfever mosquito).